Consider the following 567-residue polypeptide: Sporulation-specific protein 5 (567 aa).

Polar residues predominate over residues 1-18 (MNGIITPQKQKQLMSSPS). Disordered stretches follow at residues 1-39 (MNGI…VDVN) and 52-76 (ILLT…KKPN). The span at 21–35 (PLSTTELSTPTSQTT) shows a compositional bias: low complexity. Residues 56–66 (PGTSPNATPGS) are compositionally biased toward polar residues. RRM domains lie at 296 to 380 (RNVY…SLQD) and 384 to 462 (TNLY…FADS).

It localises to the cytoplasm. Its function is as follows. RNA-binding protein which plays a role in sporulation. Regulates the progression of meiosis I and may function in the vicinity of the Mei2 dot. This is Sporulation-specific protein 5 (spo5) from Schizosaccharomyces pombe (strain 972 / ATCC 24843) (Fission yeast).